The sequence spans 1412 residues: DNA-directed RNA polymerase subunit beta' (1412 aa).

Zn(2+) is bound by residues C70, C72, C85, and C88. Mg(2+)-binding residues include D460, D462, and D464. The Zn(2+) site is built by C819, C893, C900, and C903. Positions 1391–1412 (AEESFEFGTPETPAAEQQHSGE) are disordered.

It belongs to the RNA polymerase beta' chain family. In terms of assembly, the RNAP catalytic core consists of 2 alpha, 1 beta, 1 beta' and 1 omega subunit. When a sigma factor is associated with the core the holoenzyme is formed, which can initiate transcription. The cofactor is Mg(2+). It depends on Zn(2+) as a cofactor.

The enzyme catalyses RNA(n) + a ribonucleoside 5'-triphosphate = RNA(n+1) + diphosphate. Its function is as follows. DNA-dependent RNA polymerase catalyzes the transcription of DNA into RNA using the four ribonucleoside triphosphates as substrates. The protein is DNA-directed RNA polymerase subunit beta' of Paraburkholderia phytofirmans (strain DSM 17436 / LMG 22146 / PsJN) (Burkholderia phytofirmans).